Consider the following 340-residue polypeptide: DNA-directed RNA polymerase subunit alpha (340 aa).

The alpha N-terminal domain (alpha-NTD) stretch occupies residues 1–226; it reads MLIAQRPSLT…ELFGLARELN (226 aa). The segment at 243-340 is alpha C-terminal domain (alpha-CTD); the sequence is LAADLALPIE…DAGFVETEQY (98 aa).

The protein belongs to the RNA polymerase alpha chain family. In terms of assembly, homodimer. The RNAP catalytic core consists of 2 alpha, 1 beta, 1 beta' and 1 omega subunit. When a sigma factor is associated with the core the holoenzyme is formed, which can initiate transcription.

The catalysed reaction is RNA(n) + a ribonucleoside 5'-triphosphate = RNA(n+1) + diphosphate. Its function is as follows. DNA-dependent RNA polymerase catalyzes the transcription of DNA into RNA using the four ribonucleoside triphosphates as substrates. The protein is DNA-directed RNA polymerase subunit alpha of Streptomyces avermitilis (strain ATCC 31267 / DSM 46492 / JCM 5070 / NBRC 14893 / NCIMB 12804 / NRRL 8165 / MA-4680).